Consider the following 161-residue polypeptide: Putative ecotin-like protein (161 aa).

An N-terminal signal peptide occupies residues 1-24; it reads MSLRPIETAIASLTMLMLQGCAHA.

Belongs to the protease inhibitor I11 (ecotin) family.

The polypeptide is Putative ecotin-like protein (Methylobacillus flagellatus (strain ATCC 51484 / DSM 6875 / VKM B-1610 / KT)).